The sequence spans 710 residues: Elongation factor G (710 aa).

A tr-type G domain is found at 8–290 (SQYRNIGISA…AIVEYLPSPM (283 aa)). GTP-binding positions include 17 to 24 (AHIDAGKT), 88 to 92 (DTPGH), and 142 to 145 (NKMD).

This sequence belongs to the TRAFAC class translation factor GTPase superfamily. Classic translation factor GTPase family. EF-G/EF-2 subfamily.

The protein resides in the cytoplasm. Catalyzes the GTP-dependent ribosomal translocation step during translation elongation. During this step, the ribosome changes from the pre-translocational (PRE) to the post-translocational (POST) state as the newly formed A-site-bound peptidyl-tRNA and P-site-bound deacylated tRNA move to the P and E sites, respectively. Catalyzes the coordinated movement of the two tRNA molecules, the mRNA and conformational changes in the ribosome. The polypeptide is Elongation factor G (Buchnera aphidicola subsp. Baizongia pistaciae (strain Bp)).